Consider the following 443-residue polypeptide: Tubulin beta chain (443 aa).

The GTP site is built by glutamine 11, glutamate 69, serine 138, glycine 142, threonine 143, glycine 144, asparagine 204, and asparagine 226. Residue glutamate 69 participates in Mg(2+) binding. Residues 424–443 (QYQDATAEEEGEFEEEEGEN) are disordered. Acidic residues predominate over residues 429 to 443 (TAEEEGEFEEEEGEN).

This sequence belongs to the tubulin family. As to quaternary structure, dimer of alpha and beta chains. A typical microtubule is a hollow water-filled tube with an outer diameter of 25 nm and an inner diameter of 15 nM. Alpha-beta heterodimers associate head-to-tail to form protofilaments running lengthwise along the microtubule wall with the beta-tubulin subunit facing the microtubule plus end conferring a structural polarity. Microtubules usually have 13 protofilaments but different protofilament numbers can be found in some organisms and specialized cells. It depends on Mg(2+) as a cofactor. Post-translationally, some glutamate residues at the C-terminus are either polyglutamylated or polyglycylated. These 2 modifications occur exclusively on glutamate residues and result in either polyglutamate or polyglycine chains on the gamma-carboxyl group. Both modifications can coexist on the same protein on adjacent residues, and lowering polyglycylation levels increases polyglutamylation, and reciprocally. The precise function of such modifications is still unclear but they regulate the assembly and dynamics of axonemal microtubules.

The protein resides in the cytoplasm. It is found in the cytoskeleton. In terms of biological role, tubulin is the major constituent of microtubules, a cylinder consisting of laterally associated linear protofilaments composed of alpha- and beta-tubulin heterodimers. Microtubules grow by the addition of GTP-tubulin dimers to the microtubule end, where a stabilizing cap forms. Below the cap, tubulin dimers are in GDP-bound state, owing to GTPase activity of alpha-tubulin. This chain is Tubulin beta chain (BTU1), found in Tetrahymena thermophila.